The following is a 230-amino-acid chain: GTP cyclohydrolase III (230 aa).

Belongs to the archaeal-type GTP cyclohydrolase family.

The enzyme catalyses GTP + 3 H2O = 2-amino-5-formylamino-6-(5-phospho-D-ribosylamino)pyrimidin-4(3H)-one + 2 phosphate + 2 H(+). Its function is as follows. Catalyzes the formation of 2-amino-5-formylamino-6-ribofuranosylamino-4(3H)-pyrimidinone ribonucleotide monophosphate and inorganic phosphate from GTP. Also has an independent pyrophosphate phosphohydrolase activity. This Saccharolobus islandicus (strain M.14.25 / Kamchatka #1) (Sulfolobus islandicus) protein is GTP cyclohydrolase III.